Here is a 161-residue protein sequence, read N- to C-terminus: QLLILCLVTVINSENSTDNSTENTIENEIENATETELSEAIENETENVTETELSEAIENETENVTETELPEIIENETKIEALNLPQNPKQKYCKSEGQYCSRTIFHRCCGNLVCQLHGFFNGTCVQCLAERKFCIWSSECCSKRCRLFRCRKNPYVQVIPY.

An N-terminal signal peptide occupies residues Q1–S13. Residues N15, N19, N31, N43, N47, N59, N63, N75, and N121 are each glycosylated (N-linked (GlcNAc...) asparagine). Intrachain disulfides connect C127-C141, C134-C145, and C140-C150.

This sequence belongs to the UPF0506 family.

The protein resides in the secreted. The sequence is that of UPF0506 protein SJCHGC02965 from Schistosoma japonicum (Blood fluke).